Here is a 313-residue protein sequence, read N- to C-terminus: Carbamate kinase 2 (313 aa).

It belongs to the carbamate kinase family.

The protein resides in the cytoplasm. It carries out the reaction hydrogencarbonate + NH4(+) + ATP = carbamoyl phosphate + ADP + H2O + H(+). Its pathway is metabolic intermediate metabolism; carbamoyl phosphate degradation; CO(2) and NH(3) from carbamoyl phosphate: step 1/1. The chain is Carbamate kinase 2 (arcC2) from Staphylococcus aureus (strain Mu50 / ATCC 700699).